Consider the following 197-residue polypeptide: Holliday junction branch migration complex subunit RuvA (197 aa).

The segment at 1–64 (MIGRLRGIVA…EDSVSLYGFL (64 aa)) is domain I. Residues 65–143 (REGERRLFRD…QFGAGGALPT (79 aa)) form a domain II region. The tract at residues 144–153 (GSGPAPADPL) is flexible linker. The interval 153–197 (LSDATVALQQLGYKPAEAARMARDAFNEGDEVATVIRKALQSALR) is domain III.

The protein belongs to the RuvA family. In terms of assembly, homotetramer. Forms an RuvA(8)-RuvB(12)-Holliday junction (HJ) complex. HJ DNA is sandwiched between 2 RuvA tetramers; dsDNA enters through RuvA and exits via RuvB. An RuvB hexamer assembles on each DNA strand where it exits the tetramer. Each RuvB hexamer is contacted by two RuvA subunits (via domain III) on 2 adjacent RuvB subunits; this complex drives branch migration. In the full resolvosome a probable DNA-RuvA(4)-RuvB(12)-RuvC(2) complex forms which resolves the HJ.

The protein resides in the cytoplasm. In terms of biological role, the RuvA-RuvB-RuvC complex processes Holliday junction (HJ) DNA during genetic recombination and DNA repair, while the RuvA-RuvB complex plays an important role in the rescue of blocked DNA replication forks via replication fork reversal (RFR). RuvA specifically binds to HJ cruciform DNA, conferring on it an open structure. The RuvB hexamer acts as an ATP-dependent pump, pulling dsDNA into and through the RuvAB complex. HJ branch migration allows RuvC to scan DNA until it finds its consensus sequence, where it cleaves and resolves the cruciform DNA. In Stenotrophomonas maltophilia (strain K279a), this protein is Holliday junction branch migration complex subunit RuvA.